The primary structure comprises 783 residues: uncharacterized protein (783 aa).

The zn(2)-C6 fungal-type DNA-binding region spans 40 to 66; sequence CFNCKARKVRCDGANPCKACASNNLEC.

The protein resides in the cytoplasm. It localises to the nucleus. This is an uncharacterized protein from Schizosaccharomyces pombe (strain 972 / ATCC 24843) (Fission yeast).